The sequence spans 517 residues: Meiosis-specific transcription factor mei4 (517 aa).

The fork-head DNA-binding region spans 81 to 172 (KPPCSYATLI…QNFVSVRLHR (92 aa)). The disordered stretch occupies residues 170–278 (LHRSHSTDSN…PNAETQEDLP (109 aa)). The span at 209-223 (NSFNSSTSTSGSSSN) shows a compositional bias: low complexity. Residues 230-246 (NDASQPSNQDSSLNSNI) are compositionally biased toward polar residues. Positions 254-270 (SNVQSNSSSSENVPKPN) are enriched in low complexity.

Its subcellular location is the nucleus. Functions as a meiosis-specific transcription factor. Binds to the 5'-GTAAAYA-3' consensus sequence of the promoter of the spo6 gene. This Schizosaccharomyces pombe (strain 972 / ATCC 24843) (Fission yeast) protein is Meiosis-specific transcription factor mei4 (mei4).